The sequence spans 89 residues: Small ribosomal subunit protein uS15 (89 aa).

Belongs to the universal ribosomal protein uS15 family. As to quaternary structure, part of the 30S ribosomal subunit. Forms a bridge to the 50S subunit in the 70S ribosome, contacting the 23S rRNA.

One of the primary rRNA binding proteins, it binds directly to 16S rRNA where it helps nucleate assembly of the platform of the 30S subunit by binding and bridging several RNA helices of the 16S rRNA. Functionally, forms an intersubunit bridge (bridge B4) with the 23S rRNA of the 50S subunit in the ribosome. The protein is Small ribosomal subunit protein uS15 of Nostoc sp. (strain PCC 7120 / SAG 25.82 / UTEX 2576).